The sequence spans 624 residues: Galactan 5-O-arabinofuranosyltransferase (624 aa).

Helical transmembrane passes span 5–25 (VLGQ…VAIA), 43–63 (ALTT…GLLW), 73–93 (LGAL…PLGA), 127–147 (IGLP…IAAA), 159–179 (WSIV…AAMI), 181–201 (FEYA…YAST), 203–223 (PYAA…WAGL), 234–254 (AIVG…LLLV), 280–300 (LAVI…PYLL), 326–346 (FPMF…VWLV), 355–375 (AGAL…SMLT), 391–411 (LTVL…LAIA), and 422–442 (VVAA…QDIP).

Belongs to the glycosyltransferase 85 family.

It is found in the cell membrane. The enzyme catalyses Adds an alpha-D-arabinofuranosyl group from trans,octacis-decaprenylphospho-beta-D-arabinofuranose at the 5-O-position of the eighth, tenth and twelfth galactofuranose unit of the galactofuranan chain of [beta-D-galactofuranosyl-(1-&gt;5)-beta-D-galactofuranosyl-(1-&gt;6)]14-beta-D-galactofuranosyl-(1-&gt;5)-beta-D-galactofuranosyl-(1-&gt;4)-alpha-L-rhamnopyranosyl-(1-&gt;3)-N-acetyl-alpha-D-glucosaminyl-diphospho-trans,octacis-decaprenol.. The protein operates within cell wall biogenesis; cell wall polysaccharide biosynthesis. In terms of biological role, involved in the biosynthesis of the arabinogalactan (AG) region of the mycolylarabinogalactan-peptidoglycan (mAGP) complex, an essential component of the mycobacterial cell wall. Catalyzes the addition of the first key arabinofuranosyl (Araf) residue from the sugar donor decaprenyl-phospho-arabinose (DPA) on the C-5 of a 6-linked galactofuranosyl (Galf) of the galactan domain, thus 'priming' the galactan for further elaboration by other arabinofuranosyltransferases. It is not able to add an Araf residue to a terminal Galf. This Mycolicibacterium smegmatis (strain ATCC 700084 / mc(2)155) (Mycobacterium smegmatis) protein is Galactan 5-O-arabinofuranosyltransferase.